The chain runs to 32 residues: Cytochrome b6-f complex subunit 7 (32 aa).

The chain crosses the membrane as a helical span at residues A9–V29.

Belongs to the PetM family. The 4 large subunits of the cytochrome b6-f complex are cytochrome b6, subunit IV (17 kDa polypeptide, PetD), cytochrome f and the Rieske protein, while the 4 small subunits are PetG, PetL, PetM and PetN. The complex functions as a dimer.

It is found in the plastid. It localises to the chloroplast thylakoid membrane. Functionally, component of the cytochrome b6-f complex, which mediates electron transfer between photosystem II (PSII) and photosystem I (PSI), cyclic electron flow around PSI, and state transitions. The chain is Cytochrome b6-f complex subunit 7 from Porphyra purpurea (Red seaweed).